We begin with the raw amino-acid sequence, 87 residues long: Putative BTB/POZ domain-containing protein At3g29740 (87 aa).

The BTB domain maps to Val-24–Glu-87.

The protein operates within protein modification; protein ubiquitination. Its function is as follows. May act as a substrate-specific adapter of an E3 ubiquitin-protein ligase complex (CUL3-RBX1-BTB) which mediates the ubiquitination and subsequent proteasomal degradation of target proteins. The protein is Putative BTB/POZ domain-containing protein At3g29740 of Arabidopsis thaliana (Mouse-ear cress).